We begin with the raw amino-acid sequence, 228 residues long: UPF0758 protein CTC_02075 (228 aa).

Residues 106-228 form the MPN domain; it reads NITNPKDAAY…YISLKEKDIL (123 aa). Zn(2+) contacts are provided by histidine 177, histidine 179, and aspartate 190. Residues 177-190 carry the JAMM motif motif; sequence HNHPSGDTTPSKED.

The protein belongs to the UPF0758 family.

The polypeptide is UPF0758 protein CTC_02075 (Clostridium tetani (strain Massachusetts / E88)).